Consider the following 301-residue polypeptide: Sulfate adenylyltransferase subunit 2 (301 aa).

A disordered region spans residues 279–301 (RQGRLIDRDEAGSMEKKKREGYF).

It belongs to the PAPS reductase family. CysD subfamily. In terms of assembly, sulfate-activating enzymes, NodP and NodQ, may be physically associated.

It carries out the reaction sulfate + ATP + H(+) = adenosine 5'-phosphosulfate + diphosphate. Functionally, proposed to provide activated sulfate for transfer to nod factor. The sequence is that of Sulfate adenylyltransferase subunit 2 (nodP) from Rhizobium sp. (strain N33).